The chain runs to 283 residues: 4-diphosphocytidyl-2-C-methyl-D-erythritol kinase (283 aa).

The active site involves lysine 13. 96 to 106 provides a ligand contact to ATP; that stretch reads PMGGGIGGGSS. Residue aspartate 138 is part of the active site.

It belongs to the GHMP kinase family. IspE subfamily.

The enzyme catalyses 4-CDP-2-C-methyl-D-erythritol + ATP = 4-CDP-2-C-methyl-D-erythritol 2-phosphate + ADP + H(+). It functions in the pathway isoprenoid biosynthesis; isopentenyl diphosphate biosynthesis via DXP pathway; isopentenyl diphosphate from 1-deoxy-D-xylulose 5-phosphate: step 3/6. Functionally, catalyzes the phosphorylation of the position 2 hydroxy group of 4-diphosphocytidyl-2C-methyl-D-erythritol. The protein is 4-diphosphocytidyl-2-C-methyl-D-erythritol kinase of Pseudomonas fluorescens (strain Pf0-1).